Consider the following 215-residue polypeptide: Adenylate kinase (215 aa).

G10–T15 is a binding site for ATP. The segment at S30–V59 is NMP. AMP is bound by residues T31, R36, D57–V59, G85–R88, and Q92. Residues G126 to D163 form an LID region. R127 lines the ATP pocket. The Zn(2+) site is built by C130, C133, C150, and D153. AMP contacts are provided by R160 and R171. ATP is bound at residue R199.

It belongs to the adenylate kinase family. Monomer.

It is found in the cytoplasm. The enzyme catalyses AMP + ATP = 2 ADP. Its pathway is purine metabolism; AMP biosynthesis via salvage pathway; AMP from ADP: step 1/1. In terms of biological role, catalyzes the reversible transfer of the terminal phosphate group between ATP and AMP. Plays an important role in cellular energy homeostasis and in adenine nucleotide metabolism. In Oceanobacillus iheyensis (strain DSM 14371 / CIP 107618 / JCM 11309 / KCTC 3954 / HTE831), this protein is Adenylate kinase.